The following is a 526-amino-acid chain: Cyclin-L1 (526 aa).

The tract at residues 1–36 (MASGPHSTATAAAAASSAAPSAGGSSSGTTTTTTTT) is disordered. Cyclin-like stretches follow at residues 88-190 (ELIQ…RVLK) and 203-287 (KIIV…ETLR). Residues 318 to 526 (KGLNPDGTPA…SRSGHGRHRR (209 aa)) are disordered. Threonine 325 is modified (phosphothreonine). Phosphoserine occurs at positions 335 and 338. Glycyl lysine isopeptide (Lys-Gly) (interchain with G-Cter in SUMO2) cross-links involve residues lysine 339 and lysine 347. The segment covering 342–352 (SPREVKAEEKS) has biased composition (basic and acidic residues). 2 positions are modified to phosphoserine: serine 352 and serine 355. The segment covering 361–370 (VKKEPEDRQQ) has biased composition (basic and acidic residues). Lysine 362 participates in a covalent cross-link: Glycyl lysine isopeptide (Lys-Gly) (interchain with G-Cter in SUMO2). Serine 374 is subject to Phosphoserine. Basic residues-rich tracts occupy residues 382-418 (DSKRSRNSRSASRSRSRTRSRSRSHTPRRHYNNRRSR), 438-452 (RRHHNHGSPHLKAKH), 460-476 (SNRHGHKRKKSRSRSQS), and 486-498 (KKHRHERGHHRDR). The segment at 390–432 (RSASRSRSRTRSRSRSHTPRRHYNNRRSRSGTYSSRSRSRSRS) is RS. Phosphoserine is present on serine 445. Basic and acidic residues predominate over residues 499-508 (RERSRSFERS). Over residues 509 to 526 (HKSKHHGGSRSGHGRHRR) the composition is skewed to basic residues.

It belongs to the cyclin family. Cyclin L subfamily. As to quaternary structure, (Microbial infection) Interacts with human herpes virus 1 (HHV-1) transcriptional regulator ICP22. In terms of assembly, interacts with POLR2A via its hyperphosphorylated C-terminal domain (CTD). Interacts with CDK11A, CDK12 and CDK13. Isoforms 1 and 2, but not isoform 3, interact with CDK11B. May form a ternary complex with CDK11B and casein kinase II (CKII). Interacts with pre-mRNA-splicing factors, including at least SRSF1, SRSF2 and SRSF7/SLU7. As to expression, widely expressed. Overexpression in primary tumors of head and neck squamous cell carcinomas (HNSCC).

The protein resides in the nucleus speckle. It is found in the nucleus. Its subcellular location is the nucleoplasm. Its function is as follows. Involved in pre-mRNA splicing. Functions in association with cyclin-dependent kinases (CDKs). Inhibited by the CDK-specific inhibitor CDKN1A/p21. May play a role in the regulation of RNA polymerase II (pol II). May be a candidate proto-oncogene in head and neck squamous cell carcinomas (HNSCC). In Homo sapiens (Human), this protein is Cyclin-L1 (CCNL1).